A 160-amino-acid chain; its full sequence is 6,7-dimethyl-8-ribityllumazine synthase (160 aa).

Residues Phe-22, 57–59, and 81–83 each bind 5-amino-6-(D-ribitylamino)uracil; these read TYE and TII. Residue 86–87 participates in (2S)-2-hydroxy-3-oxobutyl phosphate binding; it reads QT. Residue His-89 is the Proton donor of the active site. 5-amino-6-(D-ribitylamino)uracil is bound at residue Leu-114. Residue Arg-128 participates in (2S)-2-hydroxy-3-oxobutyl phosphate binding.

This sequence belongs to the DMRL synthase family. In terms of assembly, forms an icosahedral capsid composed of 60 subunits, arranged as a dodecamer of pentamers.

It carries out the reaction (2S)-2-hydroxy-3-oxobutyl phosphate + 5-amino-6-(D-ribitylamino)uracil = 6,7-dimethyl-8-(1-D-ribityl)lumazine + phosphate + 2 H2O + H(+). Its pathway is cofactor biosynthesis; riboflavin biosynthesis; riboflavin from 2-hydroxy-3-oxobutyl phosphate and 5-amino-6-(D-ribitylamino)uracil: step 1/2. Its function is as follows. Catalyzes the formation of 6,7-dimethyl-8-ribityllumazine by condensation of 5-amino-6-(D-ribitylamino)uracil with 3,4-dihydroxy-2-butanone 4-phosphate. This is the penultimate step in the biosynthesis of riboflavin. The polypeptide is 6,7-dimethyl-8-ribityllumazine synthase (Buchnera aphidicola subsp. Acyrthosiphon pisum (strain APS) (Acyrthosiphon pisum symbiotic bacterium)).